A 356-amino-acid polypeptide reads, in one-letter code: MHKVLAIETSCDETSVSIVSNIGDTFRIHSNIIASQIEDHSKWGGVVPELAARKHLELLPFVLEKALEQAKIKIEEVDYIASTVAPGLVGCLRVGSITARSLCMLHSKPFLGIHHLEGHLSSILFSENYPKKSFLTLLVSGGHTELIKVDDNRGMQRLGKSFDDAAGEAFDKVGRLLGLGYPGGPAIEKIAKNGDPMKFNLPKCRISDKKGGFLKYDFSFSGLKTAVLRLVERINLAGKTVPIPDIAASFERVVAEVLVERTIKCAEDHRLDNVVVVGGVAANNTLRKMMISEASKKSIKVHLAPLDLCTDNAAMIGAAALFRIKFKDHLSNLKLGVAGRLSIEQANTLYEENPPF.

The Fe cation site is built by His115 and His119. Substrate is bound by residues 138–142 (LVSGG), Asp171, Gly184, and Asn283. A Fe cation-binding site is contributed by Asp311.

The protein belongs to the KAE1 / TsaD family. Fe(2+) is required as a cofactor.

It is found in the cytoplasm. It carries out the reaction L-threonylcarbamoyladenylate + adenosine(37) in tRNA = N(6)-L-threonylcarbamoyladenosine(37) in tRNA + AMP + H(+). In terms of biological role, required for the formation of a threonylcarbamoyl group on adenosine at position 37 (t(6)A37) in tRNAs that read codons beginning with adenine. Is involved in the transfer of the threonylcarbamoyl moiety of threonylcarbamoyl-AMP (TC-AMP) to the N6 group of A37, together with TsaE and TsaB. TsaD likely plays a direct catalytic role in this reaction. This chain is tRNA N6-adenosine threonylcarbamoyltransferase, found in Prochlorococcus marinus (strain MIT 9301).